The primary structure comprises 300 residues: Ribosomal protein bS6--L-glutamate ligase (300 aa).

One can recognise an ATP-grasp domain in the interval Leu-104 to Glu-287. Residues Lys-141, Glu-178 to Tyr-179, Asp-187, and Arg-211 to Asn-213 each bind ATP. 3 residues coordinate Mg(2+): Asp-248, Glu-260, and Asn-262. Residues Asp-248, Glu-260, and Asn-262 each contribute to the Mn(2+) site.

Belongs to the RimK family. It depends on Mg(2+) as a cofactor. Requires Mn(2+) as cofactor.

An L-glutamate ligase that catalyzes the ATP-dependent post-translational addition of glutamate residues to the C-terminus of ribosomal protein bS6 (RpsF). Is also able to catalyze the synthesis of poly-alpha-glutamate in vitro, via ATP hydrolysis from unprotected glutamate as substrate. The number of glutamate residues added to either RpsF or to poly-alpha-glutamate changes with pH. The protein is Ribosomal protein bS6--L-glutamate ligase of Salmonella agona (strain SL483).